Here is a 1221-residue protein sequence, read N- to C-terminus: WEB family protein At4g27595, chloroplastic (1221 aa).

A disordered region spans residues 1-68 (MASRTKTGLM…VSDRRTARVP (68 aa)). A chloroplast-targeting transit peptide spans 1–82 (MASRTKTGLM…ANYFLIIICM (82 aa)). Positions 32–58 (SDGNSPSPVQSTRLSIDRSPQTVNSKP) are enriched in polar residues. Coiled-coil stretches lie at residues 95 to 149 (TGLL…AAQH), 202 to 543 (TEEL…FNSK), and 587 to 1084 (AAKE…GEEI). The segment covering 1073–1083 (EASSTHEKGEE) has biased composition (basic and acidic residues). Residues 1073 to 1221 (EASSTHEKGE…LLKKKSSSQK (149 aa)) are disordered. A compositionally biased stretch (polar residues) spans 1084–1097 (ITNTNPFDNSTGEQ). 2 stretches are compositionally biased toward basic and acidic residues: residues 1106-1116 (AIDRHLKDDTT) and 1129-1160 (KGEK…TEHD). Polar residues predominate over residues 1175 to 1187 (NFDQLSNGLSLAE).

This sequence belongs to the WEB family.

The protein localises to the plastid. Its subcellular location is the chloroplast. The chain is WEB family protein At4g27595, chloroplastic from Arabidopsis thaliana (Mouse-ear cress).